The chain runs to 113 residues: UPF0102 protein CHU_0465 (113 aa).

It belongs to the UPF0102 family.

The protein is UPF0102 protein CHU_0465 of Cytophaga hutchinsonii (strain ATCC 33406 / DSM 1761 / CIP 103989 / NBRC 15051 / NCIMB 9469 / D465).